The following is a 227-amino-acid chain: D-lyxose/D-mannose isomerase (227 aa).

D-fructose contacts are provided by residues Lys-90, 103 to 110 (HFHWRKRE), His-171, Glu-186, and Asp-193. Residues His-103, His-105, Glu-110, and His-171 each coordinate Mn(2+).

It belongs to the D-lyxose ketol-isomerase family. As to quaternary structure, homodimer; disulfide-linked. Dimerization is facilitated through a disulfide bond between the two monomers of the dimeric enzyme. Mn(2+) is required as a cofactor.

The enzyme catalyses D-lyxose = D-xylulose. It catalyses the reaction D-mannose = D-fructose. Functionally, sugar isomerase that catalyzes the reversible isomerization of D-lyxose to D-xylulose, and D-mannose to D-fructose. Shows similar activity toward D-lyxose and D-mannose with a turnover and catalytic efficiency for D-lyxose as a substrate only 1.1- and 1.3-fold higher than those for D-mannose, respectively. Shows weaker activity with L-gulose, D-talose, L-ribose and L-allose. Overexpression enables cell growth on the rare pentose D-lyxose as the sole carbon source. The sequence is that of D-lyxose/D-mannose isomerase from Escherichia coli O157:H7.